The chain runs to 178 residues: Adenine phosphoribosyltransferase (178 aa).

It belongs to the purine/pyrimidine phosphoribosyltransferase family. In terms of assembly, homodimer.

Its subcellular location is the cytoplasm. It catalyses the reaction AMP + diphosphate = 5-phospho-alpha-D-ribose 1-diphosphate + adenine. The protein operates within purine metabolism; AMP biosynthesis via salvage pathway; AMP from adenine: step 1/1. Its function is as follows. Catalyzes a salvage reaction resulting in the formation of AMP, that is energically less costly than de novo synthesis. This chain is Adenine phosphoribosyltransferase, found in Erythrobacter litoralis (strain HTCC2594).